We begin with the raw amino-acid sequence, 422 residues long: Histidinol dehydrogenase (422 aa).

Residues tyrosine 123, glutamine 183, and asparagine 206 each contribute to the NAD(+) site. Positions 229, 251, and 254 each coordinate substrate. Residues glutamine 251 and histidine 254 each contribute to the Zn(2+) site. Residues glutamate 320 and histidine 321 each act as proton acceptor in the active site. Residues histidine 321, aspartate 354, glutamate 408, and histidine 413 each coordinate substrate. Aspartate 354 serves as a coordination point for Zn(2+). Histidine 413 contributes to the Zn(2+) binding site.

It belongs to the histidinol dehydrogenase family. Zn(2+) is required as a cofactor.

It catalyses the reaction L-histidinol + 2 NAD(+) + H2O = L-histidine + 2 NADH + 3 H(+). It functions in the pathway amino-acid biosynthesis; L-histidine biosynthesis; L-histidine from 5-phospho-alpha-D-ribose 1-diphosphate: step 9/9. In terms of biological role, catalyzes the sequential NAD-dependent oxidations of L-histidinol to L-histidinaldehyde and then to L-histidine. This is Histidinol dehydrogenase from Natronomonas pharaonis (strain ATCC 35678 / DSM 2160 / CIP 103997 / JCM 8858 / NBRC 14720 / NCIMB 2260 / Gabara) (Halobacterium pharaonis).